A 490-amino-acid polypeptide reads, in one-letter code: Inosine-5'-monophosphate dehydrogenase (490 aa).

2 CBS domains span residues 96 to 154 (MIIN…SKPV) and 158 to 218 (MTKE…CKDE). NAD(+) contacts are provided by residues Asp252 and 302-304 (GVG). Gly304 and Gly306 together coordinate K(+). An IMP-binding site is contributed by Ser307. Position 309 (Cys309) interacts with K(+). Catalysis depends on Cys309, which acts as the Thioimidate intermediate. IMP is bound by residues 342 to 344 (DGG), 365 to 366 (GN), and 389 to 393 (YRGMG). Arg406 (proton acceptor) is an active-site residue. Glu418 lines the IMP pocket. Residues Glu472, Ser473, and His474 each coordinate K(+).

It belongs to the IMPDH/GMPR family. As to quaternary structure, homotetramer. Requires K(+) as cofactor.

The catalysed reaction is IMP + NAD(+) + H2O = XMP + NADH + H(+). The protein operates within purine metabolism; XMP biosynthesis via de novo pathway; XMP from IMP: step 1/1. Its activity is regulated as follows. Mycophenolic acid (MPA) is a non-competitive inhibitor that prevents formation of the closed enzyme conformation by binding to the same site as the amobile flap. In contrast, mizoribine monophosphate (MZP) is a competitive inhibitor that induces the closed conformation. MPA is a potent inhibitor of mammalian IMPDHs but a poor inhibitor of the bacterial enzymes. MZP is a more potent inhibitor of bacterial IMPDH. Catalyzes the conversion of inosine 5'-phosphate (IMP) to xanthosine 5'-phosphate (XMP), the first committed and rate-limiting step in the de novo synthesis of guanine nucleotides, and therefore plays an important role in the regulation of cell growth. This is Inosine-5'-monophosphate dehydrogenase from Aquifex aeolicus (strain VF5).